The following is a 507-amino-acid chain: MITLTPGRLTLPQLRRIARENVQIALDPASFAAIDRGAQAVADIAAKGEPAYGINTGFGRLASTHIPHDQLELLQKNLVLSHAVGVGEPMARPVVRLLMALKLSSLGRGHSGIRRVVMDALVTLFNADVLPLIPVKGSVGASGDLAPLAHMSAVLLGIGDVFIRGERASAAEGLRVAGLAPLTLEAKEGLALLNGTQASTALALDNLFAIEDLYRTALVSGALSVDAAAGSVKPFDARIHELRGHRGQIDAAAAYRSLLDGSAINVSHRDCDKVQDPYSLRCQPQVMGACLDQIRHAAGVLLIEANAVSDNPLIFPDTGEVLSGGNFHAEPVAFAADNLAIAAAEIGALAERRIALLIDATLSGLPPFLVKDGGVNSGFMIAHVTAAALASENKTLAHPASVDSLPTSANQEDHVSMATFAARKLTDIAENVANILAIELLAAAQGVDLRAPHATSPALQHAMKTIRADVAHYDLDHYFAPDIAVVARRVRERAFATLSPLSFESEQ.

The segment at residues alanine 141–glycine 143 is a cross-link (5-imidazolinone (Ala-Gly)). Serine 142 is subject to 2,3-didehydroalanine (Ser).

This sequence belongs to the PAL/histidase family. Post-translationally, contains an active site 4-methylidene-imidazol-5-one (MIO), which is formed autocatalytically by cyclization and dehydration of residues Ala-Ser-Gly.

The protein resides in the cytoplasm. The catalysed reaction is L-histidine = trans-urocanate + NH4(+). Its pathway is amino-acid degradation; L-histidine degradation into L-glutamate; N-formimidoyl-L-glutamate from L-histidine: step 1/3. The chain is Histidine ammonia-lyase from Burkholderia mallei (strain NCTC 10247).